A 277-amino-acid chain; its full sequence is Ribonuclease HII (277 aa).

Residues 1 to 32 form a disordered region; sequence MIRNQANKPGRAKAATAARKSPLTKSAAKPAA. Positions 20 to 32 are enriched in low complexity; the sequence is KSPLTKSAAKPAA. An RNase H type-2 domain is found at 64 to 252; that stretch reads WPVAGCDEAG…VVAARRKHQP (189 aa). Residues Asp70, Glu71, and Asp161 each contribute to the a divalent metal cation site.

This sequence belongs to the RNase HII family. Requires Mn(2+) as cofactor. Mg(2+) is required as a cofactor.

The protein localises to the cytoplasm. It carries out the reaction Endonucleolytic cleavage to 5'-phosphomonoester.. Functionally, endonuclease that specifically degrades the RNA of RNA-DNA hybrids. The protein is Ribonuclease HII of Bradyrhizobium sp. (strain ORS 278).